We begin with the raw amino-acid sequence, 317 residues long: Cytochrome f (317 aa).

The N-terminal stretch at 1–34 (MINFKKQIMKKTTFFLCAMLLVSSILIAPRSSLA) is a signal peptide. Heme contacts are provided by Tyr-35, Cys-55, Cys-58, and His-59. The chain crosses the membrane as a helical span at residues 284–304 (IIGLIAFFIGVGLTQILLVLK).

The protein belongs to the cytochrome f family. The 4 large subunits of the cytochrome b6-f complex are cytochrome b6, subunit IV (17 kDa polypeptide, PetD), cytochrome f and the Rieske protein, while the 4 small subunits are PetG, PetL, PetM and PetN. The complex functions as a dimer. Requires heme as cofactor.

The protein localises to the cellular thylakoid membrane. Functionally, component of the cytochrome b6-f complex, which mediates electron transfer between photosystem II (PSII) and photosystem I (PSI), cyclic electron flow around PSI, and state transitions. In Prochlorococcus marinus (strain MIT 9515), this protein is Cytochrome f.